The sequence spans 341 residues: Phosphate acyltransferase (341 aa).

Belongs to the PlsX family. As to quaternary structure, homodimer. Probably interacts with PlsY.

Its subcellular location is the cytoplasm. The catalysed reaction is a fatty acyl-[ACP] + phosphate = an acyl phosphate + holo-[ACP]. Its pathway is lipid metabolism; phospholipid metabolism. Its function is as follows. Catalyzes the reversible formation of acyl-phosphate (acyl-PO(4)) from acyl-[acyl-carrier-protein] (acyl-ACP). This enzyme utilizes acyl-ACP as fatty acyl donor, but not acyl-CoA. This Aliivibrio salmonicida (strain LFI1238) (Vibrio salmonicida (strain LFI1238)) protein is Phosphate acyltransferase.